A 154-amino-acid chain; its full sequence is Myoglobin (154 aa).

In terms of domain architecture, Globin spans 2–148 (GLSDGEWQIV…FRNDIAAKYK (147 aa)). At serine 4 the chain carries Phosphoserine. A nitrite-binding site is contributed by histidine 65. Histidine 65 is a binding site for O2. Position 68 is a phosphothreonine (threonine 68). Residue histidine 94 coordinates heme b.

The protein belongs to the globin family. As to quaternary structure, monomeric.

Its subcellular location is the cytoplasm. The protein resides in the sarcoplasm. The enzyme catalyses Fe(III)-heme b-[protein] + nitric oxide + H2O = Fe(II)-heme b-[protein] + nitrite + 2 H(+). The catalysed reaction is H2O2 + AH2 = A + 2 H2O. Monomeric heme protein which primary function is to store oxygen and facilitate its diffusion within muscle tissues. Reversibly binds oxygen through a pentacoordinated heme iron and enables its timely and efficient release as needed during periods of heightened demand. Depending on the oxidative conditions of tissues and cells, and in addition to its ability to bind oxygen, it also has a nitrite reductase activity whereby it regulates the production of bioactive nitric oxide. Under stress conditions, like hypoxia and anoxia, it also protects cells against reactive oxygen species thanks to its pseudoperoxidase activity. The chain is Myoglobin (MB) from Lycaon pictus (African wild dog).